Reading from the N-terminus, the 513-residue chain is Glutamyl-tRNA(Gln) amidotransferase subunit A (513 aa).

Active-site charge relay system residues include lysine 85 and serine 160. The Acyl-ester intermediate role is filled by serine 184.

The protein belongs to the amidase family. GatA subfamily. In terms of assembly, heterotrimer of A, B and C subunits.

It carries out the reaction L-glutamyl-tRNA(Gln) + L-glutamine + ATP + H2O = L-glutaminyl-tRNA(Gln) + L-glutamate + ADP + phosphate + H(+). Its function is as follows. Allows the formation of correctly charged Gln-tRNA(Gln) through the transamidation of misacylated Glu-tRNA(Gln) in organisms which lack glutaminyl-tRNA synthetase. The reaction takes place in the presence of glutamine and ATP through an activated gamma-phospho-Glu-tRNA(Gln). This Bifidobacterium longum (strain NCC 2705) protein is Glutamyl-tRNA(Gln) amidotransferase subunit A.